Consider the following 182-residue polypeptide: Methyl-coenzyme M reductase operon protein C (182 aa).

As to quaternary structure, MCR is composed of three subunits: alpha, beta, and gamma. The function of proteins C and D is not known.

The sequence is that of Methyl-coenzyme M reductase operon protein C (mcrC) from Methanococcus voltae.